An 854-amino-acid chain; its full sequence is Envelope glycoprotein gp160 (854 aa).

An N-terminal signal peptide occupies residues methionine 1–serine 31. Over glutamate 32–isoleucine 675 the chain is Extracellular. Intrachain disulfides connect cysteine 53–cysteine 73, cysteine 118–cysteine 203, cysteine 125–cysteine 194, cysteine 130–cysteine 155, cysteine 216–cysteine 245, and cysteine 226–cysteine 237. Residues cysteine 130–asparagine 154 are V1. 7 N-linked (GlcNAc...) asparagine; by host glycosylation sites follow: asparagine 134, asparagine 140, asparagine 143, asparagine 154, asparagine 158, asparagine 186, and asparagine 195. Positions cysteine 155–cysteine 194 are V2. N-linked (GlcNAc...) asparagine; by host glycosylation is found at asparagine 239, asparagine 260, asparagine 267, asparagine 274, asparagine 299, asparagine 331, asparagine 336, asparagine 351, and asparagine 356. Residues cysteine 294–tyrosine 327 form a V3 region. An intrachain disulfide couples cysteine 294 to cysteine 328. Positions alanine 362–histidine 372 are CD4-binding loop. Disulfide bonds link cysteine 376–cysteine 429 and cysteine 383–cysteine 402. The segment at cysteine 383–cysteine 402 is V4. N-linked (GlcNAc...) asparagine; by host glycosylation is found at asparagine 384, asparagine 392, asparagine 426, asparagine 432, asparagine 446, and asparagine 450. 2 V5 regions span residues threonine 445–threonine 456 and asparagine 447–threonine 456. A fusion peptide region spans residues alanine 501–alanine 522. Residues lysine 564–isoleucine 582 are immunosuppression. A disulfide bond links cysteine 588 and cysteine 594. Asparagine 601, asparagine 608, asparagine 616, and asparagine 628 each carry an N-linked (GlcNAc...) asparagine; by host glycan. Residues lysine 624–alanine 658 are a coiled coil. An MPER; binding to GalCer region spans residues glutamate 653–lysine 674. The helical transmembrane segment at phenylalanine 676 to valine 696 threads the bilayer. The Cytoplasmic portion of the chain corresponds to arginine 697–leucine 854. Residues tyrosine 703 to leucine 706 carry the YXXL motif; contains endocytosis signal motif. Residues leucine 853–leucine 854 carry the Di-leucine internalization motif motif.

Belongs to the HIV-1 env protein family. The mature envelope protein (Env) consists of a homotrimer of non-covalently associated gp120-gp41 heterodimers. The resulting complex protrudes from the virus surface as a spike. There seems to be as few as 10 spikes on the average virion. Interacts with host CD4, CCR5 and CXCR4. Gp120 also interacts with the C-type lectins CD209/DC-SIGN and CLEC4M/DC-SIGNR (collectively referred to as DC-SIGN(R)). Gp120 and gp41 interact with GalCer. Gp120 interacts with host ITGA4/ITGB7 complex; on CD4+ T-cells, this interaction results in rapid activation of integrin ITGAL/LFA-1, which facilitates efficient cell-to-cell spreading of HIV-1. Gp120 interacts with cell-associated heparan sulfate; this interaction increases virus infectivity on permissive cells and may be involved in infection of CD4- cells. As to quaternary structure, the mature envelope protein (Env) consists of a homotrimer of non-covalently associated gp120-gp41 heterodimers. The resulting complex protrudes from the virus surface as a spike. There seems to be as few as 10 spikes on the average virion. Post-translationally, highly glycosylated by host. The high number of glycan on the protein is reffered to as 'glycan shield' because it contributes to hide protein sequence from adaptive immune system. Palmitoylation of the transmembrane protein and of Env polyprotein (prior to its proteolytic cleavage) is essential for their association with host cell membrane lipid rafts. Palmitoylation is therefore required for envelope trafficking to classical lipid rafts, but not for viral replication. In terms of processing, specific enzymatic cleavages in vivo yield mature proteins. Envelope glycoproteins are synthesized as an inactive precursor that is heavily N-glycosylated and processed likely by host cell furin in the Golgi to yield the mature SU and TM proteins. The cleavage site between SU and TM requires the minimal sequence [KR]-X-[KR]-R. About 2 of the 9 disulfide bonds of gp41 are reduced by P4HB/PDI, following binding to CD4 receptor.

It is found in the virion membrane. The protein resides in the host cell membrane. Its subcellular location is the host endosome membrane. Attaches the virus to the host lymphoid cell by binding to the primary receptor CD4. This interaction induces a structural rearrangement creating a high affinity binding site for a chemokine coreceptor like CXCR4 and/or CCR5. Acts as a ligand for CD209/DC-SIGN and CLEC4M/DC-SIGNR, which are respectively found on dendritic cells (DCs), and on endothelial cells of liver sinusoids and lymph node sinuses. These interactions allow capture of viral particles at mucosal surfaces by these cells and subsequent transmission to permissive cells. HIV subverts the migration properties of dendritic cells to gain access to CD4+ T-cells in lymph nodes. Virus transmission to permissive T-cells occurs either in trans (without DCs infection, through viral capture and transmission), or in cis (following DCs productive infection, through the usual CD4-gp120 interaction), thereby inducing a robust infection. In trans infection, bound virions remain infectious over days and it is proposed that they are not degraded, but protected in non-lysosomal acidic organelles within the DCs close to the cell membrane thus contributing to the viral infectious potential during DCs' migration from the periphery to the lymphoid tissues. On arrival at lymphoid tissues, intact virions recycle back to DCs' cell surface allowing virus transmission to CD4+ T-cells. Its function is as follows. Acts as a class I viral fusion protein. Under the current model, the protein has at least 3 conformational states: pre-fusion native state, pre-hairpin intermediate state, and post-fusion hairpin state. During fusion of viral and target intracellular membranes, the coiled coil regions (heptad repeats) assume a trimer-of-hairpins structure, positioning the fusion peptide in close proximity to the C-terminal region of the ectodomain. The formation of this structure appears to drive apposition and subsequent fusion of viral and target cell membranes. Complete fusion occurs in host cell endosomes and is dynamin-dependent, however some lipid transfer might occur at the plasma membrane. The virus undergoes clathrin-dependent internalization long before endosomal fusion, thus minimizing the surface exposure of conserved viral epitopes during fusion and reducing the efficacy of inhibitors targeting these epitopes. Membranes fusion leads to delivery of the nucleocapsid into the cytoplasm. In terms of biological role, oligomerizes in the host endoplasmic reticulum into predominantly trimers. In a second time, gp160 transits in the host Golgi, where glycosylation is completed. The precursor is then proteolytically cleaved in the trans-Golgi and thereby activated by cellular furin or furin-like proteases to produce gp120 and gp41. The chain is Envelope glycoprotein gp160 from Pan (chimpanzees).